Reading from the N-terminus, the 59-residue chain is Conotoxin Ts-03 (59 aa).

The N-terminal stretch at 1–19 (MRCLPVFIILLLLIPSAAS) is a signal peptide. Residues 20-47 (VAQPKTKDDVALASFYDNAKRTLQRHWA) constitute a propeptide that is removed on maturation.

This sequence belongs to the conotoxin T superfamily. In terms of processing, contains 2 disulfide bonds that can be either 'C1-C3, C2-C4' or 'C1-C4, C2-C3', since these disulfide connectivities have been observed for conotoxins with cysteine framework V (for examples, see AC P0DQQ7 and AC P81755). In terms of tissue distribution, expressed by the venom duct.

It localises to the secreted. The protein is Conotoxin Ts-03 of Conus tessulatus (Tessellate cone).